Consider the following 194-residue polypeptide: GTP cyclohydrolase-2 (194 aa).

47-51 contacts GTP; the sequence is RVHSE. 3 residues coordinate Zn(2+): cysteine 52, cysteine 63, and cysteine 65. GTP is bound by residues glutamine 68, 90–92, and threonine 112; that span reads EGR. Residue aspartate 124 is the Proton acceptor of the active site. The Nucleophile role is filled by arginine 126. Positions 147 and 152 each coordinate GTP.

Belongs to the GTP cyclohydrolase II family. In terms of assembly, homodimer. It depends on Zn(2+) as a cofactor.

It catalyses the reaction GTP + 4 H2O = 2,5-diamino-6-hydroxy-4-(5-phosphoribosylamino)-pyrimidine + formate + 2 phosphate + 3 H(+). It functions in the pathway cofactor biosynthesis; riboflavin biosynthesis; 5-amino-6-(D-ribitylamino)uracil from GTP: step 1/4. Functionally, catalyzes the conversion of GTP to 2,5-diamino-6-ribosylamino-4(3H)-pyrimidinone 5'-phosphate (DARP), formate and pyrophosphate. The polypeptide is GTP cyclohydrolase-2 (Buchnera aphidicola subsp. Acyrthosiphon pisum (strain APS) (Acyrthosiphon pisum symbiotic bacterium)).